Consider the following 148-residue polypeptide: Large-conductance mechanosensitive channel (148 aa).

A run of 2 helical transmembrane segments spans residues 14–34 (VVDM…INTL) and 85–105 (GIFV…FLSV).

The protein belongs to the MscL family. Homopentamer.

Its subcellular location is the cell inner membrane. Channel that opens in response to stretch forces in the membrane lipid bilayer. May participate in the regulation of osmotic pressure changes within the cell. In Chlorobium phaeobacteroides (strain DSM 266 / SMG 266 / 2430), this protein is Large-conductance mechanosensitive channel.